Reading from the N-terminus, the 141-residue chain is Large ribosomal subunit protein bL17 (141 aa).

It belongs to the bacterial ribosomal protein bL17 family. Part of the 50S ribosomal subunit. Contacts protein L32.

The chain is Large ribosomal subunit protein bL17 from Bartonella bacilliformis (strain ATCC 35685 / KC583 / Herrer 020/F12,63).